An 838-amino-acid chain; its full sequence is Semaphorin-4G (838 aa).

A signal peptide spans 1–17 (MWGRLWPLLLSILTATA). The Extracellular segment spans residues 18–675 (VPGPSLRRPS…GAQLAPDVRL (658 aa)). A Sema domain is found at 35–505 (RMTIPYEELS…APSGVIQLPL (471 aa)). N-linked (GlcNAc...) asparagine glycosylation is found at asparagine 55, asparagine 111, and asparagine 126. The cysteines at positions 104 and 115 are disulfide-linked. Cystine bridges form between cysteine 133–cysteine 142, cysteine 270–cysteine 377, and cysteine 294–cysteine 337. N-linked (GlcNAc...) asparagine glycosylation is present at asparagine 388. The PSI domain maps to 507 to 558 (SCSRYRSCYDCILARDPYCGWDPGTHACAAATTIANRTALIQDIERGNRGCE). 2 cysteine pairs are disulfide-bonded: cysteine 508/cysteine 525 and cysteine 517/cysteine 534. Residues asparagine 542 and asparagine 598 are each glycosylated (N-linked (GlcNAc...) asparagine). Residues 567 to 649 (PPLKTRSVLR…RTLLASYSLT (83 aa)) enclose the Ig-like C2-type domain. The cysteines at positions 584 and 632 are disulfide-linked. Residues 676-696 (LYVLAIAALGGLCLILASSLL) traverse the membrane as a helical segment. The Cytoplasmic portion of the chain corresponds to 697-838 (YVACLREGRR…LVEQLDESSV (142 aa)). A disordered region spans residues 723–777 (SAVQLQTVSGQCPGEEDEGDDEGAGGLEGSCLQIIPGEGAPAPPPPPPPPPPAEL). Positions 736–745 (GEEDEGDDEG) are enriched in acidic residues. Positions 763 to 775 (PAPPPPPPPPPPA) are enriched in pro residues. A phosphoserine mark is found at serine 795 and serine 837.

This sequence belongs to the semaphorin family. As to quaternary structure, interacts with PLXNB2.

The protein resides in the cell membrane. Cell surface receptor for PLXNB2. May play a role in axon guidance. This Homo sapiens (Human) protein is Semaphorin-4G (SEMA4G).